Consider the following 828-residue polypeptide: Phenylalanine--tRNA ligase beta subunit (828 aa).

The 112-residue stretch at 44 to 155 (GPVDGPLTVG…GTAEPGADGA (112 aa)) folds into the tRNA-binding domain. A B5 domain is found at 411–486 (WSPPAIQMPA…RLEGLEVIGS (76 aa)). Mg(2+) contacts are provided by Asp-464, Asp-470, Glu-473, and Glu-474. In terms of domain architecture, FDX-ACB spans 734 to 827 (SPFPAVFQDV…AAEAVGAELR (94 aa)).

It belongs to the phenylalanyl-tRNA synthetase beta subunit family. Type 1 subfamily. Tetramer of two alpha and two beta subunits. Mg(2+) serves as cofactor.

The protein resides in the cytoplasm. The catalysed reaction is tRNA(Phe) + L-phenylalanine + ATP = L-phenylalanyl-tRNA(Phe) + AMP + diphosphate + H(+). The chain is Phenylalanine--tRNA ligase beta subunit from Mycolicibacterium paratuberculosis (strain ATCC BAA-968 / K-10) (Mycobacterium paratuberculosis).